The chain runs to 410 residues: Class E basic helix-loop-helix protein 41 (410 aa).

A Glycyl lysine isopeptide (Lys-Gly) (interchain with G-Cter in SUMO2) cross-link involves residue lysine 31. In terms of domain architecture, bHLH spans 44–99 (TYKLPHRLIEKKRRDRINECIAQLKDLLPEHLKLTTLGHLEKAVVLELTLKHLKAL). A Glycyl lysine isopeptide (Lys-Gly) (interchain with G-Cter in SUMO2) cross-link involves residue lysine 121. Residues 131-166 (FHSGFQTCAKEVLQYLARFESWTPREPRCAQLVSHL) enclose the Orange domain. Disordered regions lie at residues 209 to 255 (IQRT…KRPK) and 360 to 410 (GATA…KDAP). Lysine 240 is covalently cross-linked (Glycyl lysine isopeptide (Lys-Gly) (interchain with G-Cter in SUMO2)).

As to quaternary structure, homodimer. Heterodimer with BHLHE40/DEC1. Interacts with CIART. Interacts with BMAL1. Interacts with RXRA. Interacts with NR0B2 and HNF1A. Expressed in skeletal muscle, brain and lung.

The protein localises to the nucleus. Transcriptional repressor involved in the regulation of the circadian rhythm by negatively regulating the activity of the clock genes and clock-controlled genes. Acts as the negative limb of a novel autoregulatory feedback loop (DEC loop) which differs from the one formed by the PER and CRY transcriptional repressors (PER/CRY loop). Both these loops are interlocked as it represses the expression of PER1 and in turn is repressed by PER1/2 and CRY1/2. Represses the activity of the circadian transcriptional activator: CLOCK-BMAL1 heterodimer by competing for the binding to E-box elements (5'-CACGTG-3') found within the promoters of its target genes. Negatively regulates its own expression and the expression of DBP and BHLHE41/DEC2. Acts as a corepressor of RXR and the RXR-LXR heterodimers and represses the ligand-induced RXRA/B/G, NR1H3/LXRA, NR1H4 and VDR transactivation activity. Inhibits HNF1A-mediated transactivation of CYP1A2, CYP2E1 and CYP3A11. The protein is Class E basic helix-loop-helix protein 41 (Bhlhe41) of Mus musculus (Mouse).